The sequence spans 104 residues: Chromogranin-A (104 aa).

C17 and C38 form a disulfide bridge.

The protein belongs to the chromogranin/secretogranin protein family. In terms of assembly, dimer.

Its subcellular location is the cytoplasmic vesicle. It is found in the secretory vesicle. The protein localises to the secreted. Chromogranin A probably has a paracrine role in the regulation of secretion or maturation. In Struthio camelus (Common ostrich), this protein is Chromogranin-A (CHGA).